We begin with the raw amino-acid sequence, 312 residues long: Methionyl-tRNA formyltransferase (312 aa).

A (6S)-5,6,7,8-tetrahydrofolate-binding site is contributed by 110 to 113 (SLLP).

The protein belongs to the Fmt family.

The catalysed reaction is L-methionyl-tRNA(fMet) + (6R)-10-formyltetrahydrofolate = N-formyl-L-methionyl-tRNA(fMet) + (6S)-5,6,7,8-tetrahydrofolate + H(+). In terms of biological role, attaches a formyl group to the free amino group of methionyl-tRNA(fMet). The formyl group appears to play a dual role in the initiator identity of N-formylmethionyl-tRNA by promoting its recognition by IF2 and preventing the misappropriation of this tRNA by the elongation apparatus. In Mycobacterium marinum (strain ATCC BAA-535 / M), this protein is Methionyl-tRNA formyltransferase.